Here is a 264-residue protein sequence, read N- to C-terminus: Acyl-[acyl-carrier-protein]--UDP-N-acetylglucosamine O-acyltransferase (264 aa).

The protein belongs to the transferase hexapeptide repeat family. LpxA subfamily. Homotrimer.

It localises to the cytoplasm. The catalysed reaction is a (3R)-hydroxyacyl-[ACP] + UDP-N-acetyl-alpha-D-glucosamine = a UDP-3-O-[(3R)-3-hydroxyacyl]-N-acetyl-alpha-D-glucosamine + holo-[ACP]. The protein operates within glycolipid biosynthesis; lipid IV(A) biosynthesis; lipid IV(A) from (3R)-3-hydroxytetradecanoyl-[acyl-carrier-protein] and UDP-N-acetyl-alpha-D-glucosamine: step 1/6. In terms of biological role, involved in the biosynthesis of lipid A, a phosphorylated glycolipid that anchors the lipopolysaccharide to the outer membrane of the cell. The sequence is that of Acyl-[acyl-carrier-protein]--UDP-N-acetylglucosamine O-acyltransferase from Rickettsia canadensis (strain McKiel).